The chain runs to 213 residues: Neuromodulin (213 aa).

A disordered region spans residues 1-213 (MLCCIRRTKP…AEEAGKDQNV (213 aa)). S-palmitoyl cysteine attachment occurs at residues Cys-3 and Cys-4. A compositionally biased stretch (basic and acidic residues) spans 9-33 (KPVEKNEEADQEIKQDGTKPEENAH). The region spanning 32–61 (AHKAATKIQASFRGHITRKKMKDEDKDGEN) is the IQ domain. Residues 57–73 (KDGENDTAPDESAETEE) show a composition bias toward acidic residues. Residues 74-86 (KEERVSPSEEKPV) are compositionally biased toward basic and acidic residues. The segment covering 102–122 (PNSPAAEAPPTAATDSAPSDT) has biased composition (low complexity). Residues 157–169 (EKEEEEEEEEEEE) show a composition bias toward acidic residues. Basic and acidic residues predominate over residues 191–213 (QTDKKEALDDSKPAEEAGKDQNV).

Belongs to the neuromodulin family. In terms of assembly, binds calmodulin with a greater affinity in the absence of Ca(2+) than in its presence. Palmitoylated. Palmitoylation is essential for plasma membrane association.

The protein localises to the cell membrane. It localises to the cell projection. Its subcellular location is the growth cone membrane. It is found in the synapse. The protein resides in the filopodium membrane. This protein is associated with nerve growth. It is a major component of the motile 'growth cones' that form the tips of elongating axons. Plays a role in axonal and dendritic filopodia induction. The polypeptide is Neuromodulin (gap43) (Carassius auratus (Goldfish)).